The following is a 450-amino-acid chain: MSFKDVTAKNFKGLKNVSLKKSMAMEGHTLVGTEARLGDAFELCESFSTSPSNIIEYEYQEEIRPFFQKAGLNKHSIGTHPELTGLGVGMIYNQYTVTMFVDIRKSSRLSLLLPLEQVYVVKNRILQACIDIVRALDGYPHRLMGDALMAFFGRSDVSKEDAIADAINAASTLRLILMDYIFPSLNEDIGEQIDLGVRIGLDYGAEDEVVWGNFGLGSFCEVTALGLPVDMTAKLQQLADKNTAMLGQGILDYIDFPEEYTKPKVKSGEELKYIIPNITNKEGQPINRRIRLLNMARYQELLPFKLNDKKMASAILYPNQFNFECFVIEDNKEVLYNSVSRFLPKKRRLTFKLSIYPGPGIGDLKIIFCKRNHGQEAKDDLSEDYSISIEDNKLIRVKNADNLSLLRKDGCYVLTVPEETLFRGLHTMEVIVRGNHETLFYRNIIGVYIK.

One can recognise a Guanylate cyclase domain in the interval 97–236 (VTMFVDIRKS…LPVDMTAKLQ (140 aa)). Phe-100 is an a ribonucleoside 5'-triphosphate binding site. Residues Asp-102, Ile-103, and Asp-146 each contribute to the Mn(2+) site. The segment at 318 to 450 (PNQFNFECFV…YRNIIGVYIK (133 aa)) is AGS-C domain.

It belongs to the adenylyl cyclase class-4/guanylyl cyclase family. Pyrimidine cyclase subfamily. In terms of assembly, homodimer. Mn(2+) serves as cofactor.

The protein resides in the cytoplasm. The catalysed reaction is CTP = 3',5'-cyclic CMP + diphosphate. In E.coli strain MG1655 transformed with both genes cCMP appears between 15 and 30 minutes after infection with phage T5 (at protein level). No cCMP accumulates in uninfected cells. Functionally, pycsar (pyrimidine cyclase system for antiphage resistance) provides immunity against bacteriophage. The pyrimidine cyclase (PycC) synthesizes cyclic nucleotides in response to infection; these serve as specific second messenger signals. The signal activates the adjacent effector, leading to bacterial cell death and abortive phage infection. A clade E Pycsar system. The pyrimidine cyclase gene of a two-gene Pycsar system, generates cyclic CMP (cCMP) from CTP in response to bacteriophage infection. Has little to no activity on ATP, GTP or UTP. Expression of this and adjacent effector EcPycTM (AC P0DV25) confers resistance to bacteriophage P1 and T5; expression of this gene alone does not confer resistance. When cells expressing the Pycsar system are infected by phage T5 at low multiplicity of infection (0.2 MOI) the culture survives, at 2.0 MOI bacteria enter growth arrest. The same cells enter growth arrest after exposure to 250 uM cCMP but not cUMP; thus the effector protein responds only to the cNMP produced by its cognate NTP cyclase. Some of the cells treated with cCMP have abnormal membrane protrusions. The protein is Cytidylate cyclase of Escherichia coli.